Reading from the N-terminus, the 1075-residue chain is Paired amphipathic helix protein pst2 (1075 aa).

3 PAH domains span residues 28–102, 138–208, and 243–319; these read SPNG…LPSS, LPCT…LPSS, and RPDN…TSLS. 2 positions are modified to phosphoserine: serine 641 and serine 643. The disordered stretch occupies residues 647-700; that stretch reads LTEFVKQPKINGQRESRSAAAARKKEESGNKSQSNSQNSLSDESGNVTPVSKKQ. Basic and acidic residues predominate over residues 658-675; that stretch reads GQRESRSAAAARKKEESG. Positions 676–691 are enriched in low complexity; it reads NKSQSNSQNSLSDESG.

As to quaternary structure, heterotetramer of alp13, clr6, prw1 and pst2.

Its subcellular location is the nucleus. Functionally, has a role in chromatin assembly and chromosome segregation. Involved in the deacetylation of histones. The polypeptide is Paired amphipathic helix protein pst2 (pst2) (Schizosaccharomyces pombe (strain 972 / ATCC 24843) (Fission yeast)).